Reading from the N-terminus, the 152-residue chain is Deoxyuridine 5'-triphosphate nucleotidohydrolase (152 aa).

Substrate-binding positions include 71–73 (RSG), asparagine 84, 88–90 (LID), and methionine 98.

It belongs to the dUTPase family. Requires Mg(2+) as cofactor.

The enzyme catalyses dUTP + H2O = dUMP + diphosphate + H(+). Its pathway is pyrimidine metabolism; dUMP biosynthesis; dUMP from dCTP (dUTP route): step 2/2. This enzyme is involved in nucleotide metabolism: it produces dUMP, the immediate precursor of thymidine nucleotides and it decreases the intracellular concentration of dUTP so that uracil cannot be incorporated into DNA. This Serratia proteamaculans (strain 568) protein is Deoxyuridine 5'-triphosphate nucleotidohydrolase.